The following is a 226-amino-acid chain: Ras-related protein Rab-32 (226 aa).

Ala2 is modified (N-acetylalanine). Residues Val38, Gly39, Lys40, Thr41, Ser42, Ser53, Gln54, Tyr56, and Thr59 each contribute to the GTP site. Position 41 (Thr41) interacts with Mg(2+). A Switch 1 motif is present at residues 50–64 (QLFSQHYRATIGVDF). Thr59 provides a ligand contact to Mg(2+). The residue at position 73 (Ser73) is a Phosphoserine. Residue Asp83 coordinates Mg(2+). Positions 86, 145, 146, 148, 177, and 178 each coordinate GTP. The short motif at 86–99 (GQERFGNMTRVYYK) is the Switch 2 element. The PKA-RII subunit binding domain stretch occupies residues 180-199 (NINIDEAARFLVENILANHQ). Residues 202 to 226 (PSEENDGRIKLDEETMKKENKSHCC) form a disordered region. A compositionally biased stretch (basic and acidic residues) spans 206–226 (NDGRIKLDEETMKKENKSHCC). Residues Cys225 and Cys226 are each lipidated (S-geranylgeranyl cysteine).

Belongs to the small GTPase superfamily. Rab family. As to quaternary structure, interacts with ANKRD27. A decreased interaction with ANKRD27 seen in the presence of SGSM2. Interacts with LRRK2 (via N-terminus); this interaction results in stimulation of RAB10 phosphorylation by LRRK2. Requires Mg(2+) as cofactor.

The protein resides in the mitochondrion. It localises to the mitochondrion outer membrane. Its subcellular location is the cytoplasmic vesicle. It is found in the phagosome. The protein localises to the phagosome membrane. The protein resides in the melanosome. It localises to the melanosome membrane. The catalysed reaction is GTP + H2O = GDP + phosphate + H(+). With respect to regulation, regulated by guanine the nucleotide exchange factor (GEF) BLOC-3 complex composed of HPS1 and HPS4 which promote the exchange of bound GDP for free GTP. Regulated by the GTPase activating protein (GAP) SGSM2/RUTBC1 which increases the GTP hydrolysis activity. Inhibited by GDP dissociation inhibitors (GDIs) which prevent Rab-GDP dissociation. Its function is as follows. The small GTPases Rab are key regulators of intracellular membrane trafficking, from the formation of transport vesicles to their fusion with membranes. Rabs cycle between an inactive GDP-bound form and an active GTP-bound form that is able to recruit to membranes different set of downstream effectors directly responsible for vesicle formation, movement, tethering and fusion. Also acts as an A-kinase anchoring protein by binding to the type II regulatory subunit of protein kinase A and anchoring it to the mitochondrion. Also involved in synchronization of mitochondrial fission. Plays a role in the maturation of phagosomes that engulf pathogens, such as S.aureus and M.tuberculosis. Plays an important role in the control of melanin production and melanosome biogenesis. In concert with RAB38, regulates the proper trafficking of melanogenic enzymes TYR, TYRP1 and DCT/TYRP2 to melanosomes in melanocytes. Stimulates phosphorylation of RAB10 'Thr-73' by LRRK2. In Sus scrofa (Pig), this protein is Ras-related protein Rab-32 (RAB32).